The following is a 224-amino-acid chain: UPF0758 protein AHA_0160 (224 aa).

The MPN domain occupies 102 to 224 (PLTSPQLTRD…TVSFAERGWL (123 aa)). Zn(2+) contacts are provided by H173, H175, and D186. The short motif at 173–186 (HNHPSGVAEPSRAD) is the JAMM motif element.

The protein belongs to the UPF0758 family.

This chain is UPF0758 protein AHA_0160, found in Aeromonas hydrophila subsp. hydrophila (strain ATCC 7966 / DSM 30187 / BCRC 13018 / CCUG 14551 / JCM 1027 / KCTC 2358 / NCIMB 9240 / NCTC 8049).